The chain runs to 195 residues: MDRTTLPYGLFGLDIDPYKEFGATVELLSFLPSDFFPSVRDLLDTASALYRESLESSDHCSPHHTALRQAILCWVELMTLATWVGNNLEDPASRDLVVNYVNTNMGLKIRQLLWFHISCLTFGRETVLEYLVSFGVWIRTPPAYRPPNAPILSTLPETTVVRRRGRSPRRRTPSPRRRRSPSPRRRRSQSRESQC.

Positions asparagine 148–cysteine 195 are disordered. The span at valine 161–serine 188 shows a compositional bias: basic residues. Residues serine 167, serine 174, and serine 182 each carry the phosphoserine; by host modification. The 1; half-length repeat unit spans residues serine 167 to threonine 172. Residues serine 167–serine 188 form a 3 X 7 AA repeats of S-P-R-R-R-[PR]-S region. A Bipartite nuclear localization signal motif is present at residues arginine 170–arginine 187. Tandem repeats lie at residues serine 174 to serine 180 and serine 182 to serine 188. Positions glutamine 189–cysteine 195 are RNA binding.

It belongs to the orthohepadnavirus core antigen family. In terms of assembly, homodimerizes, then multimerizes. Interacts with cytosol exposed regions of viral L glycoprotein present in the reticulum-to-Golgi compartment. Interacts with human FLNB. Phosphorylated form interacts with host importin alpha; this interaction depends on the exposure of the NLS, which itself depends upon genome maturation and/or phosphorylation of the capsid protein. Interacts with host NUP153. In terms of processing, phosphorylated by host SRPK1, SRPK2, and maybe protein kinase C or GAPDH. Phosphorylation is critical for pregenomic RNA packaging. Protein kinase C phosphorylation is stimulated by HBx protein and may play a role in transport of the viral genome to the nucleus at the late step during the viral replication cycle.

The protein resides in the virion. It localises to the host cytoplasm. Functionally, self assembles to form an icosahedral capsid. Most capsids appear to be large particles with an icosahedral symmetry of T=4 and consist of 240 copies of capsid protein, though a fraction forms smaller T=3 particles consisting of 180 capsid proteins. Entering capsids are transported along microtubules to the nucleus. Phosphorylation of the capsid is thought to induce exposure of nuclear localization signal in the C-terminal portion of the capsid protein that allows binding to the nuclear pore complex via the importin (karyopherin-) alpha and beta. Capsids are imported in intact form through the nuclear pore into the nuclear basket, where it probably binds NUP153. Only capsids that contain the mature viral genome can release the viral DNA and capsid protein into the nucleoplasm. Immature capsids get stuck in the basket. Capsids encapsulate the pre-genomic RNA and the P protein. Pre-genomic RNA is reverse-transcribed into DNA while the capsid is still in the cytoplasm. The capsid can then either be directed to the nucleus, providing more genomes for transcription, or bud through the endoplasmic reticulum to provide new virions. The chain is Capsid protein from Homo sapiens (Human).